Consider the following 265-residue polypeptide: Cytochrome c oxidase subunit 3 (265 aa).

6 helical membrane passes run 16 to 36, 41 to 61, 81 to 101, 162 to 182, 200 to 220, and 245 to 265; these read PWPI…VMYM, GGAT…FVWW, GPRY…FALF, AVYA…FQGM, FFLA…FSIV, and WHFV…WGGI.

This sequence belongs to the cytochrome c oxidase subunit 3 family. As to quaternary structure, component of the cytochrome c oxidase (complex IV, CIV), a multisubunit enzyme composed of a catalytic core of 3 subunits and several supernumerary subunits. The complex exists as a monomer or a dimer and forms supercomplexes (SCs) in the inner mitochondrial membrane with ubiquinol-cytochrome c oxidoreductase (cytochrome b-c1 complex, complex III, CIII).

Its subcellular location is the mitochondrion inner membrane. It catalyses the reaction 4 Fe(II)-[cytochrome c] + O2 + 8 H(+)(in) = 4 Fe(III)-[cytochrome c] + 2 H2O + 4 H(+)(out). In terms of biological role, component of the cytochrome c oxidase, the last enzyme in the mitochondrial electron transport chain which drives oxidative phosphorylation. The respiratory chain contains 3 multisubunit complexes succinate dehydrogenase (complex II, CII), ubiquinol-cytochrome c oxidoreductase (cytochrome b-c1 complex, complex III, CIII) and cytochrome c oxidase (complex IV, CIV), that cooperate to transfer electrons derived from NADH and succinate to molecular oxygen, creating an electrochemical gradient over the inner membrane that drives transmembrane transport and the ATP synthase. Cytochrome c oxidase is the component of the respiratory chain that catalyzes the reduction of oxygen to water. Electrons originating from reduced cytochrome c in the intermembrane space (IMS) are transferred via the dinuclear copper A center (CU(A)) of subunit 2 and heme A of subunit 1 to the active site in subunit 1, a binuclear center (BNC) formed by heme A3 and copper B (CU(B)). The BNC reduces molecular oxygen to 2 water molecules using 4 electrons from cytochrome c in the IMS and 4 protons from the mitochondrial matrix. This is Cytochrome c oxidase subunit 3 (COX3) from Helianthus annuus (Common sunflower).